Consider the following 303-residue polypeptide: Acetaldehyde dehydrogenase (303 aa).

The Acyl-thioester intermediate role is filled by C130. NAD(+) is bound by residues 161–169 (SVGPGTRKN) and N272.

Belongs to the acetaldehyde dehydrogenase family.

The enzyme catalyses acetaldehyde + NAD(+) + CoA = acetyl-CoA + NADH + H(+). The protein is Acetaldehyde dehydrogenase of Verminephrobacter eiseniae (strain EF01-2).